We begin with the raw amino-acid sequence, 406 residues long: Bifunctional enzyme IspD/IspF (406 aa).

The 2-C-methyl-D-erythritol 4-phosphate cytidylyltransferase stretch occupies residues 1-247 (MSLIRVNGEA…AFFFNPAKDT (247 aa)). Residues 248-406 (FIGMGFDTHA…HVSMRYKQKL (159 aa)) form a 2-C-methyl-D-erythritol 2,4-cyclodiphosphate synthase region. Positions 254 and 256 each coordinate a divalent metal cation. 4-CDP-2-C-methyl-D-erythritol 2-phosphate-binding positions include 254–256 (DTH) and 280–281 (HS). An a divalent metal cation-binding site is contributed by histidine 288. Residues 302–304 (DIG), 307–311 (FPDND), 378–381 (TTME), phenylalanine 385, and lysine 388 each bind 4-CDP-2-C-methyl-D-erythritol 2-phosphate.

The protein in the N-terminal section; belongs to the IspD/TarI cytidylyltransferase family. IspD subfamily. In the C-terminal section; belongs to the IspF family. A divalent metal cation serves as cofactor.

The enzyme catalyses 2-C-methyl-D-erythritol 4-phosphate + CTP + H(+) = 4-CDP-2-C-methyl-D-erythritol + diphosphate. It catalyses the reaction 4-CDP-2-C-methyl-D-erythritol 2-phosphate = 2-C-methyl-D-erythritol 2,4-cyclic diphosphate + CMP. The protein operates within isoprenoid biosynthesis; isopentenyl diphosphate biosynthesis via DXP pathway; isopentenyl diphosphate from 1-deoxy-D-xylulose 5-phosphate: step 2/6. Its pathway is isoprenoid biosynthesis; isopentenyl diphosphate biosynthesis via DXP pathway; isopentenyl diphosphate from 1-deoxy-D-xylulose 5-phosphate: step 4/6. Bifunctional enzyme that catalyzes the formation of 4-diphosphocytidyl-2-C-methyl-D-erythritol from CTP and 2-C-methyl-D-erythritol 4-phosphate (MEP) (IspD), and catalyzes the conversion of 4-diphosphocytidyl-2-C-methyl-D-erythritol 2-phosphate (CDP-ME2P) to 2-C-methyl-D-erythritol 2,4-cyclodiphosphate (ME-CPP) with a corresponding release of cytidine 5-monophosphate (CMP) (IspF). This Helicobacter pylori (strain G27) protein is Bifunctional enzyme IspD/IspF.